Consider the following 213-residue polypeptide: NADH-quinone oxidoreductase subunit I (213 aa).

4Fe-4S ferredoxin-type domains lie at R74–S103 and G113–E142. 8 residues coordinate [4Fe-4S] cluster: C83, C86, C89, C93, C122, C125, C128, and C132.

It belongs to the complex I 23 kDa subunit family. NDH-1 is composed of 14 different subunits. Subunits NuoA, H, J, K, L, M, N constitute the membrane sector of the complex. It depends on [4Fe-4S] cluster as a cofactor.

The protein resides in the cell inner membrane. The enzyme catalyses a quinone + NADH + 5 H(+)(in) = a quinol + NAD(+) + 4 H(+)(out). Functionally, NDH-1 shuttles electrons from NADH, via FMN and iron-sulfur (Fe-S) centers, to quinones in the respiratory chain. The immediate electron acceptor for the enzyme in this species is believed to be ubiquinone. Couples the redox reaction to proton translocation (for every two electrons transferred, four hydrogen ions are translocated across the cytoplasmic membrane), and thus conserves the redox energy in a proton gradient. The protein is NADH-quinone oxidoreductase subunit I of Campylobacter jejuni subsp. doylei (strain ATCC BAA-1458 / RM4099 / 269.97).